We begin with the raw amino-acid sequence, 76 residues long: uncharacterized protein (76 aa).

The next 3 helical transmembrane spans lie at 2-22, 28-48, and 56-76; these read LKVA…YSLF, LLIV…VEAI, and EYLL…KFII.

Its subcellular location is the cell membrane. This is an uncharacterized protein from Bacillus subtilis (strain 168).